The primary structure comprises 2566 residues: Highly reducing polyketide synthase verA (2566 aa).

The Ketosynthase family 3 (KS3) domain maps to 3-440 (PEPIAIIGTG…GTNAHAILES (438 aa)). The segment at 35-61 (VASEPPSTRFDNRSFYDPDPSHPGTTN) is disordered. A compositionally biased stretch (basic and acidic residues) spans 44–54 (FDNRSFYDPDP). Active-site for beta-ketoacyl synthase activity residues include cysteine 176, histidine 316, and histidine 360. Residues 554-880 (IFTGQGAQWP…IGLSNRGASG (327 aa)) form a malonyl-CoA:ACP transacylase (MAT) domain region. Catalysis depends on serine 648, which acts as the For malonyltransferase activity. The interval 950–1081 (HPLLGSLEAD…GKLLICWGNP (132 aa)) is N-terminal hotdog fold. A dehydratase (DH) domain region spans residues 950 to 1246 (HPLLGSLEAD…EGVHISPLGP (297 aa)). The PKS/mFAS DH domain maps to 950-1250 (HPLLGSLEAD…ISPLGPPDRQ (301 aa)). Histidine 982 (proton acceptor; for dehydratase activity) is an active-site residue. The C-terminal hotdog fold stretch occupies residues 1096–1250 (AGAVDIKDFY…ISPLGPPDRQ (155 aa)). The Proton donor; for dehydratase activity role is filled by aspartate 1156. Residues 1386–1581 (DVLSRFYKED…TGFGGIDTIT (196 aa)) form a methyltransferase (CMet) domain region. Residues 2127 to 2294 (KTYLLVGMTG…RRARNIVGSI (168 aa)) form a ketoreductase (KR) domain region. Positions 2411–2489 (EAAEIVAAGL…ALTADSVSKL (79 aa)) constitute a Carrier domain. Serine 2449 carries the O-(pantetheine 4'-phosphoryl)serine modification. The segment at 2505-2540 (KDVSGLTSPPEVPSDASRSSVSSGMDEIVTPESPSF) is disordered. Positions 2518-2527 (SDASRSSVSS) are enriched in low complexity.

Pantetheine 4'-phosphate serves as cofactor.

Its pathway is secondary metabolite biosynthesis; terpenoid biosynthesis. The protein operates within mycotoxin biosynthesis. In terms of biological role, highly reducing polyketide synthase (HR-PKS); part of the gene cluster that mediates the biosynthesis of the neurotoxin verrucosidin, a methylated alpha-pyrone polyketide that inhibits oxidative phosphorylation in mitochondria and thereby causes neurological diseases. The carbon backbone of verrucosidin is synthesized by the HR-PKS verA, and further modified by the other verrucodidin cluster enzymes. This chain is Highly reducing polyketide synthase verA, found in Penicillium polonicum.